The primary structure comprises 147 residues: UPF0735 ACT domain-containing protein RBAM_024960 (147 aa).

An ACT domain is found at 70–145; that stretch reads TLFFHLEDRS…FIEKVEILGS (76 aa).

It belongs to the UPF0735 family.

This is UPF0735 ACT domain-containing protein RBAM_024960 from Bacillus velezensis (strain DSM 23117 / BGSC 10A6 / LMG 26770 / FZB42) (Bacillus amyloliquefaciens subsp. plantarum).